The following is a 297-amino-acid chain: Large ribosomal subunit protein uL18 (297 aa).

Basic residues predominate over residues 258–267 (KKAHPKKRWT). A disordered region spans residues 258–277 (KKAHPKKRWTEKKLTREQRQ). The segment covering 268 to 277 (EKKLTREQRQ) has biased composition (basic and acidic residues).

It belongs to the universal ribosomal protein uL18 family. In terms of assembly, component of the large ribosomal subunit (LSU).

It localises to the cytoplasm. It is found in the nucleus. Functionally, component of the ribosome, a large ribonucleoprotein complex responsible for the synthesis of proteins in the cell. The small ribosomal subunit (SSU) binds messenger RNAs (mRNAs) and translates the encoded message by selecting cognate aminoacyl-transfer RNA (tRNA) molecules. The large subunit (LSU) contains the ribosomal catalytic site termed the peptidyl transferase center (PTC), which catalyzes the formation of peptide bonds, thereby polymerizing the amino acids delivered by tRNAs into a polypeptide chain. The nascent polypeptides leave the ribosome through a tunnel in the LSU and interact with protein factors that function in enzymatic processing, targeting, and the membrane insertion of nascent chains at the exit of the ribosomal tunnel. The protein is Large ribosomal subunit protein uL18 (RPL5A) of Helianthus annuus (Common sunflower).